Consider the following 860-residue polypeptide: DNA mismatch repair protein MutS (860 aa).

618–625 (GPNMGGKS) contributes to the ATP binding site.

Belongs to the DNA mismatch repair MutS family.

In terms of biological role, this protein is involved in the repair of mismatches in DNA. It is possible that it carries out the mismatch recognition step. This protein has a weak ATPase activity. The sequence is that of DNA mismatch repair protein MutS from Hahella chejuensis (strain KCTC 2396).